Here is a 500-residue protein sequence, read N- to C-terminus: Inner membrane transporter YjeM (500 aa).

The Cytoplasmic segment spans residues 1-10 (MTHTIKKMSL). Residues 11 to 31 (IGLILMIFTSVFGFANSPSAF) traverse the membrane as a helical segment. Topologically, residues 32–37 (YLMGYS) are periplasmic. Residues 38–58 (AIPWYIFSALLFFIPFALMMA) form a helical membrane-spanning segment. The Cytoplasmic segment spans residues 59–83 (EMGSAYRKEEGGIYSWMNNSVGPRY). The chain crosses the membrane as a helical span at residues 84-104 (AFIGTFMWFSSYVIWMVSTAA). Residues 105-124 (KIWVPFSTFVFGADMTQHWR) lie on the Periplasmic side of the membrane. Residues 125–145 (IAGLEPTQVVGLLAVGWMILV) form a helical membrane-spanning segment. Topologically, residues 146–163 (TCVAARGINKIARITAVG) are cytoplasmic. The chain crosses the membrane as a helical span at residues 164–184 (GIAVMCLNLVLLLVSVAILLL). Over 185 to 209 (NGGHFAQEINFTSSPNPGYHSGLAM) the chain is Periplasmic. Residues 210 to 230 (LSFVVFAIFAYGGIEAVGGLV) form a helical membrane-spanning segment. The Cytoplasmic portion of the chain corresponds to 231-243 (DKTEKPEKNFAKG). The chain crosses the membrane as a helical span at residues 244–264 (IVFAAIVISIGYSLAIFLWGV). Over 265 to 308 (STNWQQILSNSAVNLGNITYILMSSLGTTLGNALNLSPEAAMTV) the chain is Periplasmic. Residues 309–329 (GVWFARITGLSMFLAYTGAFF) traverse the membrane as a helical segment. Residues 330–361 (TLSYSPLKAIIQGTPKALWPAPMTTLNANGMP) lie on the Cytoplasmic side of the membrane. A helical membrane pass occupies residues 362 to 382 (ATAMWLQCVLVSLFILLVSFG). The Periplasmic segment spans residues 383–394 (GDTASAFYNKLT). A helical transmembrane segment spans residues 395-415 (LMANVSMTLPYLFLALAFPFF). The Cytoplasmic segment spans residues 416 to 433 (KARQDLERPFVLFKTKAS). The chain crosses the membrane as a helical span at residues 434-454 (TLVATGVVVLVVTFANVFTII). Residues 455 to 462 (QPVIEAGD) are Periplasmic-facing. Residues 463–483 (WDSALWMIGGPIFFSLLAMAI) form a helical membrane-spanning segment. Residues 484–500 (YQNYSSRMSADPEWAAE) are Cytoplasmic-facing.

It belongs to the amino acid-polyamine-organocation (APC) superfamily.

The protein resides in the cell inner membrane. This is Inner membrane transporter YjeM (yjeM) from Salmonella typhi.